Consider the following 299-residue polypeptide: Protoheme IX farnesyltransferase (299 aa).

Helical transmembrane passes span 24-44, 46-66, 94-114, 118-138, 146-166, 172-192, 232-252, and 278-298; these read VVAL…DQGM, WNAL…AAAI, VHAL…LAWG, LTAW…TLFL, IVLG…SVTG, ALLL…ALAV, LPFI…ALGV, and ITYL…PVTL.

The protein belongs to the UbiA prenyltransferase family. Protoheme IX farnesyltransferase subfamily.

It is found in the cell inner membrane. The enzyme catalyses heme b + (2E,6E)-farnesyl diphosphate + H2O = Fe(II)-heme o + diphosphate. It participates in porphyrin-containing compound metabolism; heme O biosynthesis; heme O from protoheme: step 1/1. Functionally, converts heme B (protoheme IX) to heme O by substitution of the vinyl group on carbon 2 of heme B porphyrin ring with a hydroxyethyl farnesyl side group. This is Protoheme IX farnesyltransferase from Hahella chejuensis (strain KCTC 2396).